The primary structure comprises 564 residues: Centrosomal protein kizuna (564 aa).

Residues 1–21 form a disordered region; that stretch reads MSEAGRAAAGPCPEVSPSRSQ. Residues 28–50 are a coiled coil; it reads RCLRDSETRRLELERKLMEYKSS. Disordered stretches follow at residues 178-201, 304-345, 442-465, 487-519, and 531-564; these read QPAACPNSLTALQGDETDGHPTQA, TGPQ…EDEP, ECGDGSSVQSNESSYSLPSIPNDS, IGNNGSEAKESQEMCSERSSSSERSGDLSRPEF, and AFWGESDDSSSEAVDALRPQTRSPEADDFDDFYD. Low complexity predominate over residues 313–324; sequence QQAASQDSSSSS. Positions 447 to 463 are enriched in polar residues; the sequence is SSVQSNESSYSLPSIPN. The span at 493–519 shows a compositional bias: basic and acidic residues; sequence EAKESQEMCSERSSSSERSGDLSRPEF.

The protein belongs to the kizuna family.

It localises to the cytoplasm. Its subcellular location is the cytoskeleton. The protein localises to the microtubule organizing center. It is found in the centrosome. The protein resides in the cilium basal body. Its function is as follows. Centrosomal protein required for establishing a robust mitotic centrosome architecture that can endure the forces that converge on the centrosomes during spindle formation. Required for stabilizing the expanded pericentriolar material around the centriole. In Gallus gallus (Chicken), this protein is Centrosomal protein kizuna (KIZ).